The primary structure comprises 77 residues: MSPKMQALLLLLGLITLLVVHAEEELSENTESERGCIKLNQECVQNKTPCCNNRPCLCYMRFNICLCEKPLGEIFGR.

The N-terminal stretch at 1–22 (MSPKMQALLLLLGLITLLVVHA) is a signal peptide. A propeptide spanning residues 23–34 (EEELSENTESER) is cleaved from the precursor. 4 disulfides stabilise this stretch: Cys36–Cys51, Cys43–Cys56, Cys50–Cys67, and Cys58–Cys65.

Belongs to the neurotoxin 02 (plectoxin) family. As to expression, expressed by the venom gland.

The protein localises to the secreted. This Lycosa singoriensis (Wolf spider) protein is U18-lycotoxin-Ls1a.